Consider the following 221-residue polypeptide: Small ribosomal subunit protein uS3c (221 aa).

One can recognise a KH type-2 domain in the interval Ile-43–Ala-121.

The protein belongs to the universal ribosomal protein uS3 family. As to quaternary structure, part of the 30S ribosomal subunit.

It is found in the plastid. The protein resides in the chloroplast. The sequence is that of Small ribosomal subunit protein uS3c (rps3) from Jasminum nudiflorum (Winter jasmine).